Reading from the N-terminus, the 253-residue chain is 5-oxoprolinase subunit A (253 aa).

The protein belongs to the LamB/PxpA family. As to quaternary structure, forms a complex composed of PxpA, PxpB and PxpC.

It catalyses the reaction 5-oxo-L-proline + ATP + 2 H2O = L-glutamate + ADP + phosphate + H(+). Catalyzes the cleavage of 5-oxoproline to form L-glutamate coupled to the hydrolysis of ATP to ADP and inorganic phosphate. The polypeptide is 5-oxoprolinase subunit A (Bacillus cereus (strain ATCC 10987 / NRS 248)).